The sequence spans 215 residues: MPERLYQEEKQKAVNVLNDLKIKLYNKGFFPATSGNLSYKLHDDPLIFAVTTSGKDKGTVTHEDVIFVDKDGKPVEKTKMKPSAETMVHSYIYQKTDAGCVIHVHTPANNFISYVYFEDGKVKIKDLEMIKALDIWKENAEIEVPIVDNFFDLKKLAEEAGKAINPDVPAVLIKTHGIYCWGRDEFEAKRHVEAFEFMFELMKNLIIFKGSKDIW.

Histidine 103 and histidine 105 together coordinate Zn(2+).

It belongs to the aldolase class II family. MtnB subfamily. Zn(2+) serves as cofactor.

The catalysed reaction is 5-(methylsulfanyl)-D-ribulose 1-phosphate = 5-methylsulfanyl-2,3-dioxopentyl phosphate + H2O. It participates in amino-acid biosynthesis; L-methionine biosynthesis via salvage pathway; L-methionine from S-methyl-5-thio-alpha-D-ribose 1-phosphate: step 2/6. In terms of biological role, catalyzes the dehydration of methylthioribulose-1-phosphate (MTRu-1-P) into 2,3-diketo-5-methylthiopentyl-1-phosphate (DK-MTP-1-P). The chain is Methylthioribulose-1-phosphate dehydratase from Sulfurihydrogenibium sp. (strain YO3AOP1).